Consider the following 518-residue polypeptide: Endoglucanase 18 (518 aa).

The Cytoplasmic portion of the chain corresponds to 1–35; the sequence is MANCVRCCCWLLVLMLMALAITAAVVFVRYKNGEG. The helical transmembrane segment at 36 to 56 threads the bilayer; the sequence is VFPFPGVPGAVDHKYADALAV. Topologically, residues 57-518 are extracellular; that stretch reads ALQFFQVQKS…STSSLARSLS (462 aa). Asparagine 71 carries an N-linked (GlcNAc...) asparagine glycan. Aspartate 101 (nucleophile) is an active-site residue. Asparagine 214, asparagine 251, and asparagine 272 each carry an N-linked (GlcNAc...) asparagine glycan. Residue histidine 436 is part of the active site. Residue asparagine 477 is glycosylated (N-linked (GlcNAc...) asparagine). Catalysis depends on residues aspartate 482 and glutamate 491.

This sequence belongs to the glycosyl hydrolase 9 (cellulase E) family.

The protein resides in the membrane. The enzyme catalyses Endohydrolysis of (1-&gt;4)-beta-D-glucosidic linkages in cellulose, lichenin and cereal beta-D-glucans.. The chain is Endoglucanase 18 from Oryza sativa subsp. japonica (Rice).